A 100-amino-acid polypeptide reads, in one-letter code: Urease subunit gamma (100 aa).

The protein belongs to the urease gamma subunit family. As to quaternary structure, heterotrimer of UreA (gamma), UreB (beta) and UreC (alpha) subunits. Three heterotrimers associate to form the active enzyme.

The protein localises to the cytoplasm. It catalyses the reaction urea + 2 H2O + H(+) = hydrogencarbonate + 2 NH4(+). The protein operates within nitrogen metabolism; urea degradation; CO(2) and NH(3) from urea (urease route): step 1/1. The chain is Urease subunit gamma from Streptomyces griseus subsp. griseus (strain JCM 4626 / CBS 651.72 / NBRC 13350 / KCC S-0626 / ISP 5235).